The chain runs to 136 residues: Phosphoribosyl-AMP cyclohydrolase (136 aa).

Asp89 contributes to the Mg(2+) binding site. Residue Cys90 coordinates Zn(2+). Mg(2+) contacts are provided by Asp91 and Asp93. Zn(2+) is bound by residues Cys106 and Cys113.

This sequence belongs to the PRA-CH family. As to quaternary structure, homodimer. Requires Mg(2+) as cofactor. Zn(2+) is required as a cofactor.

It is found in the cytoplasm. It carries out the reaction 1-(5-phospho-beta-D-ribosyl)-5'-AMP + H2O = 1-(5-phospho-beta-D-ribosyl)-5-[(5-phospho-beta-D-ribosylamino)methylideneamino]imidazole-4-carboxamide. The protein operates within amino-acid biosynthesis; L-histidine biosynthesis; L-histidine from 5-phospho-alpha-D-ribose 1-diphosphate: step 3/9. In terms of biological role, catalyzes the hydrolysis of the adenine ring of phosphoribosyl-AMP. The polypeptide is Phosphoribosyl-AMP cyclohydrolase (Bifidobacterium longum subsp. infantis (strain ATCC 15697 / DSM 20088 / JCM 1222 / NCTC 11817 / S12)).